A 647-amino-acid polypeptide reads, in one-letter code: Threonine--tRNA ligase (647 aa).

In terms of domain architecture, TGS spans 1 to 61; sequence MIKITFPDGA…EEDGSIEIVT (61 aa). The tract at residues 240–538 is catalytic; the sequence is DHRKLGKELD…LIETYKGAFP (299 aa). Zn(2+)-binding residues include Cys-334, His-385, and His-515.

The protein belongs to the class-II aminoacyl-tRNA synthetase family. Homodimer. It depends on Zn(2+) as a cofactor.

It is found in the cytoplasm. The catalysed reaction is tRNA(Thr) + L-threonine + ATP = L-threonyl-tRNA(Thr) + AMP + diphosphate + H(+). In terms of biological role, catalyzes the attachment of threonine to tRNA(Thr) in a two-step reaction: L-threonine is first activated by ATP to form Thr-AMP and then transferred to the acceptor end of tRNA(Thr). Also edits incorrectly charged L-seryl-tRNA(Thr). This Streptococcus pyogenes serotype M1 protein is Threonine--tRNA ligase.